The chain runs to 141 residues: MTNWINTVSRDHVERGVRGRFTQANHGKPHMLRKMARGDWIVFYSPKTEHPNGAPLQAFTAIGQVADDEPYQVEITGDFQPWRRNVDFLESVETPIRPLIDSLDFIEDKSRWGYKFRFGVFRIDDHDLDVIRSAMAVDLCA.

It belongs to the UPF0310 family.

The sequence is that of UPF0310 protein Mflv_0785 from Mycolicibacterium gilvum (strain PYR-GCK) (Mycobacterium gilvum (strain PYR-GCK)).